The sequence spans 166 residues: NADH-ubiquinone oxidoreductase chain 6 (166 aa).

5 helical membrane-spanning segments follow: residues 1 to 21 (MMYF…AFAS), 26 to 46 (IYGG…IVSL), 47 to 67 (GGSF…LVVF), 86 to 106 (TVVL…YEFF), and 139 to 159 (CGGW…FVVL).

It belongs to the complex I subunit 6 family. In terms of assembly, core subunit of respiratory chain NADH dehydrogenase (Complex I) which is composed of 45 different subunits.

It localises to the mitochondrion inner membrane. The catalysed reaction is a ubiquinone + NADH + 5 H(+)(in) = a ubiquinol + NAD(+) + 4 H(+)(out). In terms of biological role, core subunit of the mitochondrial membrane respiratory chain NADH dehydrogenase (Complex I) which catalyzes electron transfer from NADH through the respiratory chain, using ubiquinone as an electron acceptor. Essential for the catalytic activity and assembly of complex I. The protein is NADH-ubiquinone oxidoreductase chain 6 (MT-ND6) of Tachyglossus aculeatus aculeatus (Southeast Australian short-beaked echidna).